We begin with the raw amino-acid sequence, 299 residues long: Probable lipid kinase YegS-like (299 aa).

Residues 1-129 (MSERKALLIL…IDLGEVGGQM (129 aa)) enclose the DAGKc domain. ATP-binding positions include threonine 39, 65-71 (GDGTLRD), and threonine 92. 3 residues coordinate Mg(2+): leucine 210, aspartate 213, and leucine 215. Residue glutamate 268 is the Proton acceptor of the active site.

The protein belongs to the diacylglycerol/lipid kinase family. YegS lipid kinase subfamily. It depends on Mg(2+) as a cofactor. Requires Ca(2+) as cofactor.

The protein resides in the cytoplasm. Functionally, probably phosphorylates lipids; the in vivo substrate is unknown. The chain is Probable lipid kinase YegS-like from Pseudomonas fluorescens (strain ATCC BAA-477 / NRRL B-23932 / Pf-5).